The primary structure comprises 356 residues: Trans-enoyl reductase pgmF (356 aa).

NADP(+) contacts are provided by residues 57 to 60 (VDFK), 175 to 178 (SGGC), 198 to 201 (STPN), Tyr216, 261 to 262 (VG), and 342 to 343 (AK).

This sequence belongs to the zinc-containing alcohol dehydrogenase family.

FAD-linked oxidoreductase; part of the gene cluster that mediates the biosynthesis of pleosporalin A, ascomycone A, as well as a third cryptic naphthoquinone derived pigment, all responsible for the coloration of conidia. The pathway begins with the biosynthesis of the cyclized heptaketide 3-acetonyl-1,6,8-trihydroxy-2-naphthaldehyde by the NR-PKS pgmA. The C-6 hydroxyl group is further methylated by the O-methyltransferase pgmB to yield fusarubinaldehyde which is in turn oxidized by the cytochrome P450 monooxygenase pgmC at C-9. The C-1 hydroxyl group is then methylated spontaneously. Although pgmE, pgmD and pgmH are essential for the production of pleosporalin A, it is not the case for the 2 other final products and it remains difficult to assign a specific function to each enzyme. PgmF and pgmG seem not to be involved in pigment biosynthesis although they were regulated by the cluster-specific transcription factor pgmR. This is Trans-enoyl reductase pgmF from Aspergillus terreus.